The sequence spans 518 residues: GMP synthase [glutamine-hydrolyzing] (518 aa).

Residues 13-203 form the Glutamine amidotransferase type-1 domain; it reads KIIVLDFGSQ…ALNICGCKGD (191 aa). C90 acts as the Nucleophile in catalysis. Catalysis depends on residues H177 and E179. The GMPS ATP-PPase domain maps to 204 to 393; that stretch reads WTMENFSEVE…LGMPDAIVWR (190 aa). 231–237 contributes to the ATP binding site; it reads SGGVDSS.

Homodimer.

It catalyses the reaction XMP + L-glutamine + ATP + H2O = GMP + L-glutamate + AMP + diphosphate + 2 H(+). The protein operates within purine metabolism; GMP biosynthesis; GMP from XMP (L-Gln route): step 1/1. In terms of biological role, catalyzes the synthesis of GMP from XMP. In Listeria innocua serovar 6a (strain ATCC BAA-680 / CLIP 11262), this protein is GMP synthase [glutamine-hydrolyzing].